The primary structure comprises 145 residues: NADH-quinone oxidoreductase subunit A 1 (145 aa).

The next 3 helical transmembrane spans lie at 18–38, 71–91, and 104–124; these read ILPL…LLLA, VPFY…VFIF, and GLIH…WLWL.

Belongs to the complex I subunit 3 family. In terms of assembly, NDH-1 is composed of 14 different subunits. Subunits NuoA, H, J, K, L, M, N constitute the membrane sector of the complex.

It localises to the cell inner membrane. The enzyme catalyses a quinone + NADH + 5 H(+)(in) = a quinol + NAD(+) + 4 H(+)(out). Its function is as follows. NDH-1 shuttles electrons from NADH, via FMN and iron-sulfur (Fe-S) centers, to quinones in the respiratory chain. The immediate electron acceptor for the enzyme in this species is believed to be ubiquinone. Couples the redox reaction to proton translocation (for every two electrons transferred, four hydrogen ions are translocated across the cytoplasmic membrane), and thus conserves the redox energy in a proton gradient. This chain is NADH-quinone oxidoreductase subunit A 1, found in Geotalea uraniireducens (strain Rf4) (Geobacter uraniireducens).